The sequence spans 370 residues: NSFL1 cofactor p47 (370 aa).

The segment at 54-73 is disordered; that stretch reads SQATPSSVSRGTAPSDNRVT. Residues Ser74, Ser102, Ser114, and Ser140 each carry the phosphoserine modification. 2 disordered regions span residues 80–116 and 138–157; these read HDQDEEEEEEEGQRFYAGGSERSGQQIVGPPRKKSPN and TKSPGETSKPRPFAGGGYRL. Positions 109–115 match the Nuclear localization signal motif; it reads PPRKKSP. Tyr167 carries the post-translational modification Phosphotyrosine. The Nuclear localization signal motif lies at 172 to 175; the sequence is RRRH. Phosphoserine is present on residues Ser176, Ser192, and Ser272. The region spanning 179–244 is the SEP domain; that stretch reads DVHVVLKLWK…MEDHRDEDFV (66 aa). The UBX domain maps to 291-368; it reads EAEPTTNIQI…NLLNAVIVQR (78 aa).

It belongs to the NSFL1C family. In terms of assembly, part of a ternary complex containing STX5A, NSFL1C and VCP. NSFL1C forms a homotrimer that binds to one end of a VCP homohexamer. The complex binds to membranes enriched in phosphatidylethanolamine-containing lipids and promotes Golgi membrane fusion. Interaction with VCIP135 leads to dissociation of the complex via ATP hydrolysis by VCP. Binds ubiquitin and mono-ubiquitinated proteins via its N-terminal UBA-like domain when bound to VCP. In terms of processing, phosphorylated during mitosis. Phosphorylation inhibits interaction with Golgi membranes and is required for the fragmentation of the Golgi stacks during mitosis.

The protein resides in the nucleus. Its subcellular location is the golgi apparatus. It is found in the golgi stack. The protein localises to the chromosome. It localises to the cytoplasm. The protein resides in the cytoskeleton. Its subcellular location is the microtubule organizing center. It is found in the centrosome. Functionally, reduces the ATPase activity of VCP. Necessary for the fragmentation of Golgi stacks during mitosis and for VCP-mediated reassembly of Golgi stacks after mitosis. May play a role in VCP-mediated formation of transitional endoplasmic reticulum (tER). Inhibits the activity of CTSL (in vitro). Together with UBXN2B/p37, regulates the centrosomal levels of kinase AURKA/Aurora A during mitotic progression by promoting AURKA removal from centrosomes in prophase. Also, regulates spindle orientation during mitosis. The sequence is that of NSFL1 cofactor p47 (Nsfl1c) from Mus musculus (Mouse).